The following is a 346-amino-acid chain: tRNA-specific 2-thiouridylase MnmA (346 aa).

An ATP-binding site is contributed by 6–13; the sequence is AMSGGTDS. C90 functions as the Nucleophile in the catalytic mechanism. Cysteines 90 and 187 form a disulfide. G114 serves as a coordination point for ATP. An interaction with tRNA region spans residues 137 to 139; it reads KDQ. The Cysteine persulfide intermediate role is filled by C187. The interval 292–293 is interaction with tRNA; sequence RY.

Belongs to the MnmA/TRMU family.

It localises to the cytoplasm. The enzyme catalyses S-sulfanyl-L-cysteinyl-[protein] + uridine(34) in tRNA + AH2 + ATP = 2-thiouridine(34) in tRNA + L-cysteinyl-[protein] + A + AMP + diphosphate + H(+). In terms of biological role, catalyzes the 2-thiolation of uridine at the wobble position (U34) of tRNA, leading to the formation of s(2)U34. This Nitratidesulfovibrio vulgaris (strain ATCC 29579 / DSM 644 / CCUG 34227 / NCIMB 8303 / VKM B-1760 / Hildenborough) (Desulfovibrio vulgaris) protein is tRNA-specific 2-thiouridylase MnmA.